The sequence spans 784 residues: MDADDSRAPKGSLRKFLEHLSGAGKAIGVLTSGGDAQGMNAAVRAVVRMGIYVGAKVCFIYEGYQGMVDGGSNIAEADWESVSSILQVGGTIIGSARCQAFRTREGRLKAACNLLQRGITNLCVIGGDGSLTGANLFRKEWSGLLEELARNGQIDKEAVQKYAYLNVVGMVGSIDNDFCGTDMTIGTDSALHRIIEVVDAIMTTAQSHQRTFVLEVMGRHCGYLALVSALACGADWVFLPESPPEEGWEEQMCVKLSENRARKKRLNIIIVAEGAIDTQNKPITSEKIKELVVTQLGYDTRVTILGHVQRGGTPSAFDRILASRMGVEAVIALLEATPDTPACVVSLNGNHAVRLPLMECVQMTQDVQKAMDERRFQDAVRLRGRSFAGNLNTYKRLAIKLPDDQIPKTNCNVAVINVGAPAAGMNAAVRSAVRVGIADGHRMLAIYDGFDGFAKGQIKEIGWTDVGGWTGQGGSILGTKRVLPGKYLEEIATQMRTHSINALLIIGGFEAYLGLLELSAAREKHEEFCVPMVMVPATVSNNVPGSDFSIGADTALNTITDTCDRIKQSASGTKRRVFIIETMGGYCGYLANMGGLAAGADAAYIFEEPFDIRDLQSSVEHLTEKMKTTIQRGLVLRNESCSENYTTDFIYQLYSEEGKGVFDCRKNVLGHMQQGGAPSPFDRNFGTKISARAMEWITAKLKETRGRGKKFTTDDSVCVLGISKRNVIFQPVAELKKQTDFEHRIPKEQWWLKLRPLMKILAKYKASYDVSDSGQLEHVQPWSV.

An N-acetylmethionine modification is found at M1. The tract at residues 1 to 399 is N-terminal catalytic PFK domain 1; that stretch reads MDADDSRAPK…NLNTYKRLAI (399 aa). Phosphoserine occurs at positions 6, 12, and 21. ATP is bound by residues G34, 97-98, and 127-130; these read RC and GDGS. Residue D128 coordinates Mg(2+). S142 is modified (phosphoserine). Substrate contacts are provided by residues 173–175, R210, 217–219, E273, R301, and 307–310; these read SID, MGR, and HVQR. The Proton acceptor role is filled by D175. Residue S386 is modified to Phosphoserine. An N6-acetyllysine modification is found at K395. The interval 400 to 411 is interdomain linker; that stretch reads KLPDDQIPKTNC. Positions 412–784 are C-terminal regulatory PFK domain 2; sequence NVAVINVGAP…QLEHVQPWSV (373 aa). Residue R481 coordinates beta-D-fructose 2,6-bisphosphate. K486 carries the N6-acetyllysine modification. Residues 538–542, R576, 583–585, and E639 each bind beta-D-fructose 2,6-bisphosphate; these read TVSNN and MGG. S540 carries an O-linked (GlcNAc) serine glycan. Y651 is subject to Phosphotyrosine. Residues R665 and 671–674 contribute to the beta-D-fructose 2,6-bisphosphate site; that span reads HMQQ. K688 carries the N6-acetyllysine modification. R744 is a binding site for beta-D-fructose 2,6-bisphosphate. Phosphoserine is present on S783.

The protein belongs to the phosphofructokinase type A (PFKA) family. ATP-dependent PFK group I subfamily. Eukaryotic two domain clade 'E' sub-subfamily. Homo- and heterotetramers. Phosphofructokinase (PFK) enzyme functions as a tetramer composed of different combinations of 3 types of subunits, called PFKM (M), PFKL (L) and PFKP (P). The composition of the PFK tetramer differs according to the tissue type it is present in. The kinetic and regulatory properties of the tetrameric enzyme are dependent on the subunit composition, hence can vary across tissues. Interacts with ATG4B; promoting phosphorylation of ATG4B. Mg(2+) serves as cofactor. In terms of processing, glcNAcylation decreases enzyme activity. Post-translationally, phosphorylation at Ser-386 promotes interaction with ATG4B.

It is found in the cytoplasm. The catalysed reaction is beta-D-fructose 6-phosphate + ATP = beta-D-fructose 1,6-bisphosphate + ADP + H(+). Its pathway is carbohydrate degradation; glycolysis; D-glyceraldehyde 3-phosphate and glycerone phosphate from D-glucose: step 3/4. Its activity is regulated as follows. Allosterically activated by ADP, AMP, or fructose 2,6-bisphosphate, and allosterically inhibited by ATP or citrate. Functionally, catalyzes the phosphorylation of D-fructose 6-phosphate to fructose 1,6-bisphosphate by ATP, the first committing step of glycolysis. In Pongo abelii (Sumatran orangutan), this protein is ATP-dependent 6-phosphofructokinase, platelet type (PFKP).